The sequence spans 348 residues: MGNKIISMMKKDSKDGGGGGSKSKRMNRSQRKLLADEEMLHRRALSMAIHQAQLSQRFDGSMSRRVGSTSTRKRTLSDPFSNGKQVPDFSESLIVKKFVLVHGEGFGAWCWYKMVASLEESGLSPVTVDLTGCGFNMTDTNTVSTLEEYSKPLIDLLENLPEEEKVILVGHSTGGASISYALERFPEKISKAIFVCATMVSDGQRPFDVFSEELGSAERFMKESQFLIYGNGKDKPPTGFMFEKPHMKGLYFNQSPNKDIALAMISMRPVPLGPMMEKVSLTAERYGKGRRFYVQTLDDRALSPDVQEKLVRENSPEGVFKIKGSDHCPFFSKPQSLHKILLEIAQIP.

Disordered stretches follow at residues 1 to 29 (MGNK…MNRS) and 60 to 80 (GSMS…SDPF). A chloroplast-targeting transit peptide spans 1-76 (MGNKIISMMK…GSTSTRKRTL (76 aa)). Serine 77 bears the Phosphoserine mark. Serine 172 functions as the Acyl-ester intermediate in the catalytic mechanism. Residues aspartate 299 and histidine 327 each act as charge relay system in the active site.

It belongs to the AB hydrolase superfamily. Methylesterase family.

The protein resides in the plastid. Its subcellular location is the chloroplast. Its function is as follows. Putative methylesterase. The polypeptide is Putative methylesterase 14, chloroplastic (Arabidopsis thaliana (Mouse-ear cress)).